The following is a 332-amino-acid chain: DNA double-strand break repair nuclease NurA (332 aa).

2 residues coordinate Mn(2+): aspartate 57 and aspartate 132.

Belongs to the NurA family. Requires Mn(2+) as cofactor.

In terms of biological role, involved in DNA double-strand break (DSB) repair. Probably acts with HerA to stimulate resection of the 5' strand and produce the long 3' single-strand that is required for RadA loading. Exhibits both single-stranded endonuclease activity and 5'-3' exonuclease activity on single-stranded and double-stranded DNA. The sequence is that of DNA double-strand break repair nuclease NurA from Sulfolobus acidocaldarius (strain ATCC 33909 / DSM 639 / JCM 8929 / NBRC 15157 / NCIMB 11770).